The sequence spans 86 residues: Large ribosomal subunit protein bL27 (86 aa).

The segment at 1–24 (MAHKKAGGSSRNGRDSEGRRLGVK) is disordered.

This sequence belongs to the bacterial ribosomal protein bL27 family.

The protein is Large ribosomal subunit protein bL27 of Magnetococcus marinus (strain ATCC BAA-1437 / JCM 17883 / MC-1).